A 1277-amino-acid polypeptide reads, in one-letter code: DNA repair protein RAD5B (1277 aa).

The segment at 271 to 293 (KLEQENDDLFSSGDSDGTSAKRR) is disordered. Positions 674–871 (PTATQMARGG…YSLLCFLHVE (198 aa)) constitute a Helicase ATP-binding domain. 687–694 (DAMGLGKT) contributes to the ATP binding site. The short motif at 822–825 (DEAH) is the DEAH box element. The segment at 1040–1080 (CPICLESADDPVLTPCAHRMCRECLLTSWRSPSCGLCPICR) adopts an RING-type zinc-finger fold. The Helicase C-terminal domain maps to 1113-1277 (ELLKCLEKIK…RLEELKMLFR (165 aa)).

The protein belongs to the SNF2/RAD54 helicase family. RAD16 subfamily.

It is found in the nucleus. In terms of biological role, possesses intrinsic ATP-dependent nucleosome-remodeling activity. This activity may be required for DNA repair. Does not seem to be required for DNA repair and regulation of homologous recombination (HR). The polypeptide is DNA repair protein RAD5B (Arabidopsis thaliana (Mouse-ear cress)).